A 321-amino-acid chain; its full sequence is Phospho-N-acetylmuramoyl-pentapeptide-transferase (321 aa).

The next 10 membrane-spanning stretches (helical) occupy residues 6-26 (MLIP…LFIG), 53-73 (TMGG…VGIW), 77-97 (LTLS…LGFY), 121-141 (ILGA…HTLW), 144-164 (IIGN…WLVG), 175-195 (LDGL…IIAA), 200-220 (TDVL…LMFN), 226-246 (IFMG…VAIL), 251-271 (WSLL…ILQV), and 301-321 (IDLT…AFFL).

The protein belongs to the glycosyltransferase 4 family. MraY subfamily. It depends on Mg(2+) as a cofactor.

It is found in the cell membrane. The catalysed reaction is UDP-N-acetyl-alpha-D-muramoyl-L-alanyl-gamma-D-glutamyl-L-lysyl-D-alanyl-D-alanine + di-trans,octa-cis-undecaprenyl phosphate = Mur2Ac(oyl-L-Ala-gamma-D-Glu-L-Lys-D-Ala-D-Ala)-di-trans,octa-cis-undecaprenyl diphosphate + UMP. It participates in cell wall biogenesis; peptidoglycan biosynthesis. Functionally, catalyzes the initial step of the lipid cycle reactions in the biosynthesis of the cell wall peptidoglycan: transfers peptidoglycan precursor phospho-MurNAc-pentapeptide from UDP-MurNAc-pentapeptide onto the lipid carrier undecaprenyl phosphate, yielding undecaprenyl-pyrophosphoryl-MurNAc-pentapeptide, known as lipid I. The chain is Phospho-N-acetylmuramoyl-pentapeptide-transferase from Lacticaseibacillus paracasei (strain ATCC 334 / BCRC 17002 / CCUG 31169 / CIP 107868 / KCTC 3260 / NRRL B-441) (Lactobacillus paracasei).